We begin with the raw amino-acid sequence, 934 residues long: Protein translocase subunit SecA (934 aa).

ATP contacts are provided by residues Q87, 105-109, and D515; that span reads GEGKT. The Zn(2+) site is built by C918, C920, C929, and H930.

It belongs to the SecA family. Monomer and homodimer. Part of the essential Sec protein translocation apparatus which comprises SecA, SecYEG and auxiliary proteins SecDF-YajC and YidC. Zn(2+) is required as a cofactor.

It is found in the cell inner membrane. The protein localises to the cytoplasm. It carries out the reaction ATP + H2O + cellular proteinSide 1 = ADP + phosphate + cellular proteinSide 2.. Its function is as follows. Part of the Sec protein translocase complex. Interacts with the SecYEG preprotein conducting channel. Has a central role in coupling the hydrolysis of ATP to the transfer of proteins into and across the cell membrane, serving both as a receptor for the preprotein-SecB complex and as an ATP-driven molecular motor driving the stepwise translocation of polypeptide chains across the membrane. The sequence is that of Protein translocase subunit SecA from Ralstonia pickettii (strain 12J).